A 377-amino-acid polypeptide reads, in one-letter code: Galactoside alpha-(1,2)-fucosyltransferase 1 (377 aa).

Residues 1 to 8 lie on the Cytoplasmic side of the membrane; sequence MWTPSRRQ. A helical; Signal-anchor for type II membrane protein membrane pass occupies residues 9-26; the sequence is LCLAFLLVCVLSAGSFFF. The Lumenal segment spans residues 27–377; it reads HLNGGNFFRN…WKPDSLFRLV (351 aa). Residues N67, N303, and N329 are each glycosylated (N-linked (GlcNAc...) asparagine).

The protein belongs to the glycosyltransferase 11 family. In the adult, highly expressed in pancreas, testis and epididymis and to a lesser extent in thymus, lung, stomach, small intestine, colon, spleen and uterus. Not expressed in brain, heart, skeletal muscle, kidney, liver and bone marrow. Expressed in epididymis and testis.

The protein resides in the golgi apparatus. The protein localises to the golgi stack membrane. It catalyses the reaction a beta-D-galactosyl-(1-&gt;4)-N-acetyl-beta-D-glucosaminyl derivative + GDP-beta-L-fucose = an alpha-L-Fuc-(1-&gt;2)-beta-D-Gal-(1-&gt;4)-beta-D-GlcNAc derivative + GDP + H(+). The catalysed reaction is a ganglioside GA1 + GDP-beta-L-fucose = a ganglioside Fuc-GA1 + GDP + H(+). The enzyme catalyses a beta-D-Gal-(1-&gt;3)-beta-D-GlcNAc-(1-&gt;3)-beta-D-Gal-(1-&gt;4)-beta-D-Glc-(1&lt;-&gt;1')-Cer(d18:1(4E)) + GDP-beta-L-fucose = alpha-L-fucosyl-(1-&gt;2)- beta-D-galactosyl-(1-&gt;3)-N-acetyl-beta-D-glucosaminyl-(1-&gt;3)-beta-D-galactosyl-(1-&gt;4)-beta-D-glucosyl-(1&lt;-&gt;1')-N-acylsphing-4-enine + GDP + H(+). It carries out the reaction a neolactoside nLc4Cer(d18:1(4E)) + GDP-beta-L-fucose = a neolactoside IV(2)-alpha-Fuc-nLc4Cer(d18:1(4E)) + GDP + H(+). It catalyses the reaction a ganglioside GM1 + GDP-beta-L-fucose = a ganglioside Fuc-GM1 + GDP + H(+). The catalysed reaction is beta-D-galactosyl-(1-&gt;3)-N-acetyl-D-galactosamine + GDP-beta-L-fucose = alpha-L-fucosyl-(1-&gt;2)-beta-D-galactosyl-(1-&gt;3)-N-acetyl-D-galactosamine + GDP + H(+). The protein operates within protein modification; protein glycosylation. Functionally, catalyzes the transfer of L-fucose, from a guanosine diphosphate-beta-L-fucose, to the terminal galactose residue of glycoconjugates through an alpha(1,2) linkage leading to H antigen synthesis that is an intermediate substrate in the synthesis of ABO blood group antigens. H antigen is essential for maturation of the glomerular layer of the main olfactory bulb, in cell migration and early cell-cell contacts during tumor associated angiogenesis. Preferentially fucosylates soluble lactose and to a lesser extent, fucosylates glycolipids gangliosides GA1 and GM1a. The protein is Galactoside alpha-(1,2)-fucosyltransferase 1 of Mus musculus (Mouse).